The sequence spans 1597 residues: Mitogen-activated protein kinase kinase kinase 4 (1597 aa).

Disordered stretches follow at residues 1–128 and 424–465; these read MRDA…VETV and SPRP…PRVP. Positions 59 to 69 are enriched in acidic residues; that stretch reads SDPEDFSDETN. Phosphoserine is present on Ser-77. Residues 84–94 show a composition bias toward basic residues; it reads QMKRLSAKHQR. Residue Ser-424 is modified to Phosphoserine. At Thr-440 the chain carries Phosphothreonine. Phosphoserine is present on Ser-449. Acidic residues predominate over residues 449 to 458; sequence SGTEESDEEP. Thr-451 carries the phosphothreonine modification. Phosphoserine is present on residues Ser-454 and Ser-492. 3 disordered regions span residues 1137–1157, 1190–1220, and 1233–1263; these read RPVKVPRCHSDPPNPHLIIPT, AAGRPGPGGGDSVPAKPVNTAPDTRGSSVPE, and FRSLSRHSSPTEERDEPAYPRSDSSGSTRRS. A compositionally biased stretch (polar residues) spans 1210–1219; that stretch reads APDTRGSSVP. 2 positions are modified to phosphoserine: Ser-1241 and Ser-1263. Basic and acidic residues predominate over residues 1241–1250; it reads SPTEERDEPA. The region spanning 1332-1590 is the Protein kinase domain; sequence WQRGNKIGEG…ASQLLDHAFV (259 aa). Residues 1338–1346 and Lys-1361 contribute to the ATP site; that span reads IGEGQYGKV. Asp-1452 acts as the Proton acceptor in catalysis.

It belongs to the protein kinase superfamily. STE Ser/Thr protein kinase family. MAP kinase kinase kinase subfamily. In terms of assembly, monomer and homodimer. Homodimerization enhances kinase activity. Interacts with CDC42. Interacts with TRAF4; this promotes homodimerization. Binds both upstream activators and downstream substrates in multimolecular complexes. Interacts with AXIN1 and DIXDC1; interaction with DIXDC1 prevents interaction with AXIN1. Interacts with GADD45 and MAP2K6. Interacts with ZFP36; this interaction enhances the association with SH3KBP1/CIN85. Interacts with SH3KBP1; this interaction enhances the association with ZFP36. Mg(2+) serves as cofactor. Widely expressed. High expression was found in skeletal muscle, kidney, testis followed by heart brain and lung. Low expression was found in spleen.

Its subcellular location is the cytoplasm. The protein resides in the perinuclear region. It carries out the reaction L-seryl-[protein] + ATP = O-phospho-L-seryl-[protein] + ADP + H(+). The catalysed reaction is L-threonyl-[protein] + ATP = O-phospho-L-threonyl-[protein] + ADP + H(+). Its activity is regulated as follows. N-terminal autoinhibitory domain interacts with the C-terminal kinase domain, inhibiting kinase activity, and preventing interaction with its substrate, MAP2K6. The GADD45 proteins activate the kinase by binding to the N-terminal domain. Activated by phosphorylation on Thr-1494. Component of a protein kinase signal transduction cascade. Activates the CSBP2, P38 and JNK MAPK pathways, but not the ERK pathway. Specifically phosphorylates and activates MAP2K4 and MAP2K6. The sequence is that of Mitogen-activated protein kinase kinase kinase 4 (Map3k4) from Mus musculus (Mouse).